The chain runs to 185 residues: Ribosome-recycling factor (185 aa).

This sequence belongs to the RRF family.

It is found in the cytoplasm. Functionally, responsible for the release of ribosomes from messenger RNA at the termination of protein biosynthesis. May increase the efficiency of translation by recycling ribosomes from one round of translation to another. In Corynebacterium diphtheriae (strain ATCC 700971 / NCTC 13129 / Biotype gravis), this protein is Ribosome-recycling factor.